A 295-amino-acid polypeptide reads, in one-letter code: MPALRDFRRRIKSVKSTQKICKAMKAVATAKMARAQATVVAARPYARQLHEVLGRVASAARDVQNPLLTVREPKRVCYIVITADRGLCGGFNSNILRTAVKELSKWEEFKLVAVGRKCRNFFRFRDWERDAEFIGLGENIRFEQGQQIARFVINKYIAGEYDAVYMVYSKFVNMLVQQPTVVKLLPVEPPAEEAAEKAGGEEAAAPKKATVDYIFEPSAADVLDYLLPRYVENSVYHGLIESKASEQSARMMAMDAATKNAGEMIDRLTLQMNRLRQEGITKELLDIVGGAAALE.

Belongs to the ATPase gamma chain family. In terms of assembly, F-type ATPases have 2 components, CF(1) - the catalytic core - and CF(0) - the membrane proton channel. CF(1) has five subunits: alpha(3), beta(3), gamma(1), delta(1), epsilon(1). CF(0) has three main subunits: a, b and c.

Its subcellular location is the cell membrane. Its function is as follows. Produces ATP from ADP in the presence of a proton gradient across the membrane. The gamma chain is believed to be important in regulating ATPase activity and the flow of protons through the CF(0) complex. This Desulforudis audaxviator (strain MP104C) protein is ATP synthase gamma chain.